A 504-amino-acid polypeptide reads, in one-letter code: 2-methylcitrate dehydratase 2 (504 aa).

The protein belongs to the PrpD family. Monomer.

It catalyses the reaction (2S,3S)-2-methylcitrate = 2-methyl-cis-aconitate + H2O. It carries out the reaction citrate = D-threo-isocitrate. It participates in organic acid metabolism; propanoate degradation. Its pathway is carbohydrate metabolism; tricarboxylic acid cycle; isocitrate from oxaloacetate: step 1/2. Its function is as follows. Involved in the catabolism of short chain fatty acids (SCFA) via the 2-methylcitrate cycle I (propionate degradation route). Catalyzes the dehydration of 2-methylcitrate (2-MC) to yield the cis isomer 2-methyl-aconitate. Could also catalyze the dehydration of citrate and the hydration of cis-aconitate. The polypeptide is 2-methylcitrate dehydratase 2 (prpD2) (Corynebacterium glutamicum (strain ATCC 13032 / DSM 20300 / JCM 1318 / BCRC 11384 / CCUG 27702 / LMG 3730 / NBRC 12168 / NCIMB 10025 / NRRL B-2784 / 534)).